Here is a 131-residue protein sequence, read N- to C-terminus: Large ribosomal subunit protein bL17 (131 aa).

This sequence belongs to the bacterial ribosomal protein bL17 family. Part of the 50S ribosomal subunit. Contacts protein L32.

This Herminiimonas arsenicoxydans protein is Large ribosomal subunit protein bL17.